The chain runs to 354 residues: Transcription termination factor 3, mitochondrial (354 aa).

The N-terminal 89 residues, 1 to 89 (MFCSALRNIL…SFNLAAYVNN (89 aa)), are a transit peptide targeting the mitochondrion.

Belongs to the mTERF family.

The protein localises to the mitochondrion. Functionally, binds promoter DNA and regulates initiation of transcription. Regulator of mitochondrial ribosome biogenesis and translation that is essential for development. Required for normal mitochondrial transcription and translation. Required for assembly of mitochondrial respiratory complexes and normal mitochondrial function. Maintains 16S rRNA levels and functions in mitochondrial ribosome assembly by regulating the biogenesis of the 39S ribosomal subunit. In Drosophila melanogaster (Fruit fly), this protein is Transcription termination factor 3, mitochondrial.